The following is a 206-amino-acid chain: uncharacterized protein (206 aa).

The interval 128-206 (KRYNVQKPKV…DQSWLDELLR (79 aa)) is disordered. Residues 171-181 (YISSNHSSMHI) show a composition bias toward polar residues.

Its subcellular location is the cytoplasm. The protein resides in the nucleus. This is an uncharacterized protein from Schizosaccharomyces pombe (strain 972 / ATCC 24843) (Fission yeast).